The sequence spans 84 residues: Small ribosomal subunit protein uS17 (84 aa).

It belongs to the universal ribosomal protein uS17 family. In terms of assembly, part of the 30S ribosomal subunit.

One of the primary rRNA binding proteins, it binds specifically to the 5'-end of 16S ribosomal RNA. This chain is Small ribosomal subunit protein uS17, found in Klebsiella pneumoniae subsp. pneumoniae (strain ATCC 700721 / MGH 78578).